Here is a 589-residue protein sequence, read N- to C-terminus: Monocopper oxidase-like protein SKS1 (589 aa).

The signal sequence occupies residues 1–24 (MAATCSLLASFLLCFALLSAVSFA). Residues asparagine 62, asparagine 111, asparagine 204, asparagine 243, asparagine 260, asparagine 296, asparagine 345, asparagine 365, asparagine 433, and asparagine 447 are each glycosylated (N-linked (GlcNAc...) asparagine). The tract at residues 322–356 (LPVPKTDVSSPWSAMSQPKTIRQNTSASGARPNPQ) is disordered. The segment covering 328 to 349 (DVSSPWSAMSQPKTIRQNTSAS) has biased composition (polar residues). Histidine 455 is a Cu cation binding site. Residue serine 563 is the site of GPI-anchor amidated serine attachment. A propeptide spans 564–589 (AATSILNGHLKLMLLMVLLASVFRFC) (removed in mature form).

This sequence belongs to the multicopper oxidase family. The cofactor is Cu cation.

The protein localises to the cell membrane. This chain is Monocopper oxidase-like protein SKS1 (SKS1), found in Arabidopsis thaliana (Mouse-ear cress).